The primary structure comprises 145 residues: Terminase small subunit (145 aa).

Positions 23 to 48 are helix-turn-helix (HTH); the sequence is NATKAAIAAGYSKNSASAIGAENLQK.

The protein belongs to the SPP1-like small terminase family. In terms of assembly, homodecamer. Interacts with the terminase large subunit gp2; the active complex is probably composed of a one monomer of gp2 and two or more decamers of gp1.

In terms of biological role, the terminase small subunit specifically recognizes the non-adjacent pacL and pacR packaging subsites and regulates the ATPase activity of the terminase large subunit. The terminase lies at a unique vertex of the procapsid and is composed of two subunits, a small terminase subunit involved in viral DNA recognition (packaging 'pac' sequence), and a large terminase subunit possessing endonucleolytic and ATPase activities. Both terminase subunits heterooligomerize and are docked on the portal protein to form the packaging machine. The terminase large subunit exhibits endonuclease activity and cleaves the viral genome concatemer once the capsid is full (headful packaging). Once the capsid is packaged with the DNA, the terminase complex is substituted by neck proteins. The sequence is that of Terminase small subunit (1) from Bacillus phage rho15 (Bacteriophage rho-15).